A 268-amino-acid chain; its full sequence is Undecaprenyl-diphosphatase (268 aa).

7 helical membrane-spanning segments follow: residues 47 to 67 (FAVLIQLGAILAILALYFVKL), 83 to 103 (FVIGVLVAFLPAAVIGAAFGG), 109 to 129 (LFNPWVVCFSLIVGGAILLWV), 144 to 164 (FPLLTYFYIGCAQCTAMIPGV), 184 to 204 (AAEFSFFLAIPTMLGAFVYDL), 217 to 237 (IIVAIGFVVSFITAIIVVKTF), and 248 to 268 (LFAWWRVIVGTLGLIALALGL).

This sequence belongs to the UppP family.

It is found in the cell inner membrane. The catalysed reaction is di-trans,octa-cis-undecaprenyl diphosphate + H2O = di-trans,octa-cis-undecaprenyl phosphate + phosphate + H(+). Its function is as follows. Catalyzes the dephosphorylation of undecaprenyl diphosphate (UPP). Confers resistance to bacitracin. In Rhodopseudomonas palustris (strain ATCC BAA-98 / CGA009), this protein is Undecaprenyl-diphosphatase.